We begin with the raw amino-acid sequence, 338 residues long: CRISPR-associated endonuclease Cas1 (338 aa).

Mn(2+) is bound by residues Glu155, His220, and Glu235.

Belongs to the CRISPR-associated endonuclease Cas1 family. In terms of assembly, homodimer, forms a heterotetramer with a Cas2 homodimer. Requires Mg(2+) as cofactor. Mn(2+) is required as a cofactor.

Its function is as follows. CRISPR (clustered regularly interspaced short palindromic repeat), is an adaptive immune system that provides protection against mobile genetic elements (viruses, transposable elements and conjugative plasmids). CRISPR clusters contain spacers, sequences complementary to antecedent mobile elements, and target invading nucleic acids. CRISPR clusters are transcribed and processed into CRISPR RNA (crRNA). Acts as a dsDNA endonuclease. Involved in the integration of spacer DNA into the CRISPR cassette. The type III-A Csm effector complex binds crRNA and acts as a crRNA-guided RNase, DNase and cyclic oligoadenylate synthase; binding of target RNA cognate to the crRNA is required for all activities. In Mycobacterium tuberculosis (strain CDC 1551 / Oshkosh), this protein is CRISPR-associated endonuclease Cas1.